A 536-amino-acid chain; its full sequence is Inactive phospholipase D5 (536 aa).

Residues 1 to 68 (MEIRQHEWLS…DKLEHSQQKC (68 aa)) are Cytoplasmic-facing. The helical transmembrane segment at 69 to 89 (IVIFALVCCFAVLVALIFSAV) threads the bilayer. At 90–536 (DIMGEDEDGL…NATGREPLSV (447 aa)) the chain is on the extracellular side. Asparagine 121 carries an N-linked (GlcNAc...) asparagine glycan. Positions 215-242 (NKGRLQSSFWIVDKQHVYIGSAGLDWRS) constitute a PLD phosphodiesterase 1 domain. N-linked (GlcNAc...) asparagine glycosylation is present at asparagine 302. The PLD phosphodiesterase 2 domain maps to 434-460 (FPKLNRNKYMVTDGAAYIGNFDWVGND). A disordered region spans residues 503-536 (QPTKQPNCSSLSKLKSPSKQPAMANATGREPLSV). A compositionally biased stretch (low complexity) spans 511 to 521 (SSLSKLKSPSK).

Belongs to the phospholipase D family.

Its subcellular location is the membrane. This is Inactive phospholipase D5 (Pld5) from Mus musculus (Mouse).